The chain runs to 233 residues: Large ribosomal subunit protein uL22m (233 aa).

It belongs to the universal ribosomal protein uL22 family. Component of the mitochondrial ribosome large subunit (39S) which comprises a 16S rRNA and about 50 distinct proteins.

The protein resides in the mitochondrion. The chain is Large ribosomal subunit protein uL22m (mRpL22) from Drosophila pseudoobscura pseudoobscura (Fruit fly).